Consider the following 387-residue polypeptide: 3-ketoacyl-CoA thiolase (387 aa).

C91 (acyl-thioester intermediate) is an active-site residue. Residues H343 and C373 each act as proton acceptor in the active site.

It belongs to the thiolase-like superfamily. Thiolase family. As to quaternary structure, heterotetramer of two alpha chains (FadB) and two beta chains (FadA).

The protein localises to the cytoplasm. The enzyme catalyses an acyl-CoA + acetyl-CoA = a 3-oxoacyl-CoA + CoA. The protein operates within lipid metabolism; fatty acid beta-oxidation. Functionally, catalyzes the final step of fatty acid oxidation in which acetyl-CoA is released and the CoA ester of a fatty acid two carbons shorter is formed. In Yersinia pseudotuberculosis serotype O:1b (strain IP 31758), this protein is 3-ketoacyl-CoA thiolase.